The primary structure comprises 676 residues: DNA ligase (676 aa).

NAD(+)-binding positions include 42 to 46, 91 to 92, and Glu121; these read DDVYD and SL. Residue Lys123 is the N6-AMP-lysine intermediate of the active site. Positions 144, 178, 294, and 318 each coordinate NAD(+). 4 residues coordinate Zn(2+): Cys412, Cys415, Cys430, and Cys435. The BRCT domain occupies 596 to 676; it reads NSTSEFTGKR…QLQAAMDETK (81 aa).

It belongs to the NAD-dependent DNA ligase family. LigA subfamily. Requires Mg(2+) as cofactor. The cofactor is Mn(2+).

The catalysed reaction is NAD(+) + (deoxyribonucleotide)n-3'-hydroxyl + 5'-phospho-(deoxyribonucleotide)m = (deoxyribonucleotide)n+m + AMP + beta-nicotinamide D-nucleotide.. Its function is as follows. DNA ligase that catalyzes the formation of phosphodiester linkages between 5'-phosphoryl and 3'-hydroxyl groups in double-stranded DNA using NAD as a coenzyme and as the energy source for the reaction. It is essential for DNA replication and repair of damaged DNA. This is DNA ligase from Levilactobacillus brevis (strain ATCC 367 / BCRC 12310 / CIP 105137 / JCM 1170 / LMG 11437 / NCIMB 947 / NCTC 947) (Lactobacillus brevis).